A 527-amino-acid chain; its full sequence is N-acetylglucosamine-1-phosphodiester alpha-N-acetylglucosaminidase (527 aa).

Positions 1–25 (MASSMGRFLLFFIALRGFLLEASGD) are cleaved as a signal peptide. The propeptide at 26–49 (FGSGASRDDDVLLPYSRARARLAR) is removed in mature form. At 50–463 (DCTRVHAGRL…SLLTRTTWLA (414 aa)) the chain is on the lumenal side. 5 disulfide bridges follow: C116–C149, C133–C324, C308–C315, C363–C374, and C381–C390. 3 N-linked (GlcNAc...) asparagine glycosylation sites follow: N209, N215, and N297. The EGF-like domain occupies 359–391 (DKLDCGPANCSQHGLCTETGCRCEAGWTGSNCS). N-linked (GlcNAc...) asparagine glycans are attached at residues N367, N389, and N421. Residues 464–484 (ITLALAFLLLISTAANVSLFL) form a helical membrane-spanning segment. The Cytoplasmic segment spans residues 485–527 (GSRAARRRHLDGAYVYHPLQEVNGEHPAAEKEQLGDSSNPFKD). The mediates the interaction with AP4M1 stretch occupies residues 498–505 (YVYHPLQE). Positions 500–503 (YHPL) match the Tyrosine-based internalization motif motif. Positions 523 to 527 (NPFKD) match the NPF internalization motif motif.

In terms of assembly, homotetramer arranged as two disulfide-linked homodimers. Interacts with AP4M1. Glycosylated. Contains complex N-linked oligosaccharides with appreciable amounts of sialic acid. Post-translationally, the precursor is cleaved and activated in the trans-Golgi network by a furin endopeptidase.

It localises to the golgi apparatus. The protein localises to the golgi stack membrane. It is found in the trans-Golgi network. It carries out the reaction N(4)-[6-(N-acetyl-alpha-D-glucosaminyl-1-phospho)-alpha-D-mannosyl-(1-&gt;2)-alpha-D-mannosyl-(glycan)]-L-asparaginyl-[protein] + H2O = N(4)-[6-phospho-alpha-D-mannosyl-(1-&gt;2)-alpha-D-mannosyl-(glycan)]-L-asparaginyl-[protein] + N-acetyl-D-glucosamine + H(+). It functions in the pathway protein modification; protein glycosylation. Functionally, catalyzes the second step in the formation of the mannose 6-phosphate targeting signal on lysosomal enzyme oligosaccharides by removing GlcNAc residues from GlcNAc-alpha-P-mannose moieties, which are formed in the first step. Also hydrolyzes UDP-GlcNAc, a sugar donor for Golgi N-acetylglucosaminyltransferases. This chain is N-acetylglucosamine-1-phosphodiester alpha-N-acetylglucosaminidase (NAGPA), found in Bos taurus (Bovine).